The primary structure comprises 137 residues: MIWKRHLTLDELNATSQNTLVAHLGIVYTRLGDDVLEAEMPVDARTHQPFGLLHGGASAALAETLGSMAGYLMTRDGQCVVGTELNATHHRAVSQGKVRGVCLPLHLGRQNQSWEITLFDEQGRRCCTCRLGTAVMG.

The Nucleophile or proton acceptor role is filled by glutamate 63.

It belongs to the thioesterase PaaI family. Homotetramer. Dimer of dimers. Interacts specifically with the aryl carrier protein (ArCP) domain of EntB.

The protein resides in the cytoplasm. Its pathway is siderophore biosynthesis; enterobactin biosynthesis. Its function is as follows. Required for optimal enterobactin synthesis. Acts as a proofreading enzyme that prevents EntB misacylation by hydrolyzing the thioester bound existing between EntB and wrongly charged molecules. The polypeptide is Proofreading thioesterase EntH (Salmonella paratyphi B (strain ATCC BAA-1250 / SPB7)).